Consider the following 367-residue polypeptide: tRNA-specific 2-thiouridylase MnmA (367 aa).

ATP-binding positions include 11-18 and methionine 37; that span reads GLSGGVDS. Residues 109 to 111 form an interaction with target base in tRNA region; that stretch reads NPD. Cysteine 114 (nucleophile) is an active-site residue. Residues cysteine 114 and cysteine 211 are joined by a disulfide bond. An ATP-binding site is contributed by glycine 139. An interaction with tRNA region spans residues 161 to 163; the sequence is KDQ. Residue cysteine 211 is the Cysteine persulfide intermediate of the active site.

This sequence belongs to the MnmA/TRMU family.

It is found in the cytoplasm. The catalysed reaction is S-sulfanyl-L-cysteinyl-[protein] + uridine(34) in tRNA + AH2 + ATP = 2-thiouridine(34) in tRNA + L-cysteinyl-[protein] + A + AMP + diphosphate + H(+). In terms of biological role, catalyzes the 2-thiolation of uridine at the wobble position (U34) of tRNA, leading to the formation of s(2)U34. The sequence is that of tRNA-specific 2-thiouridylase MnmA from Mycoplasma genitalium (strain ATCC 33530 / DSM 19775 / NCTC 10195 / G37) (Mycoplasmoides genitalium).